Reading from the N-terminus, the 396-residue chain is S-adenosylmethionine synthase (396 aa).

ATP is bound at residue H16. D18 provides a ligand contact to Mg(2+). E44 contacts K(+). E57 and Q100 together coordinate L-methionine. The flexible loop stretch occupies residues 100-110 (QSKDIALGVDK). ATP contacts are provided by residues 176–178 (DGK), 243–244 (RF), D252, 258–259 (RK), A275, and K279. D252 lines the L-methionine pocket. Position 283 (K283) interacts with L-methionine.

Belongs to the AdoMet synthase family. Homotetramer; dimer of dimers. Mg(2+) is required as a cofactor. Requires K(+) as cofactor.

Its subcellular location is the cytoplasm. It carries out the reaction L-methionine + ATP + H2O = S-adenosyl-L-methionine + phosphate + diphosphate. Its pathway is amino-acid biosynthesis; S-adenosyl-L-methionine biosynthesis; S-adenosyl-L-methionine from L-methionine: step 1/1. In terms of biological role, catalyzes the formation of S-adenosylmethionine (AdoMet) from methionine and ATP. The overall synthetic reaction is composed of two sequential steps, AdoMet formation and the subsequent tripolyphosphate hydrolysis which occurs prior to release of AdoMet from the enzyme. The chain is S-adenosylmethionine synthase from Lachnoclostridium phytofermentans (strain ATCC 700394 / DSM 18823 / ISDg) (Clostridium phytofermentans).